The primary structure comprises 679 residues: Protein CASP (679 aa).

Residues 1-614 (MDTSVYSHAL…VILQNKMTRM (614 aa)) are Cytoplasmic-facing. Coiled-coil stretches lie at residues 14–90 (AKAD…EKVL) and 178–341 (RNWK…NYSD). S364 is modified (phosphoserine). Positions 385–444 (ANKKLQATLAEYRSKSTAQEEERNELKKSVDQLKQQIATLKEANEKLETDLEKVENVSPH) form a coiled coil. A phosphoserine mark is found at S450 and S453. Positions 492-540 (IVTKQRDRFRSRNMDLEKQLRQGNSEKGKLKLEISKLKGDNTKLYERIR) form a coiled coil. S555 carries the phosphoserine modification. Residues 615–635 (VFLFYCIGLHGLVFMMSMYVI) traverse the membrane as a helical; Anchor for type IV membrane protein segment. Residues 636-679 (NISGYMTPEVGIVQSAKSSSNLNGGLGGAEKVAAGVGSVHGINR) are Lumenal-facing.

Belongs to the CASP family.

The protein resides in the golgi apparatus membrane. Its function is as follows. May be involved in intra-Golgi transport. This Saccharomyces cerevisiae (strain ATCC 204508 / S288c) (Baker's yeast) protein is Protein CASP (COY1).